Here is a 64-residue protein sequence, read N- to C-terminus: Antimicrobial peptide THP2 (64 aa).

Positions 1–28 (MRILYLLFSLLFLALQVSPGLSSPKRDM) are cleaved as a signal peptide. 3 disulfide bridges follow: C31/C57, C36/C51, and C41/C58.

Expressed in circulating heterophil granulocytes and bone marrow (at protein level).

The protein resides in the secreted. In terms of biological role, antibacterial activity against the Gram-positive bacterium Staphylococcus aureus. Lacks antibacterial activity against the Gram-negative bacterium E.coli K-12. The protein is Antimicrobial peptide THP2 of Meleagris gallopavo (Wild turkey).